Consider the following 599-residue polypeptide: Laccase-15 (599 aa).

Positions 1–29 are cleaved as a signal peptide; that stretch reads MKRCQSSRPTAAVAAVVAAVSMIIVLVSG. Plastocyanin-like domains follow at residues 46–162 and 173–328; these read VVSQ…PRHG and REVP…YSSN. Residues Asn-51 and Asn-92 are each glycosylated (N-linked (GlcNAc...) asparagine). Cu cation is bound by residues His-96 and His-98. An N-linked (GlcNAc...) asparagine glycan is attached at Asn-124. Cu cation-binding residues include His-141 and His-143. Asn-193, Asn-217, Asn-331, Asn-355, Asn-412, and Asn-454 each carry an N-linked (GlcNAc...) asparagine glycan. The Plastocyanin-like 3 domain maps to 444-586; the sequence is ELAERPPRAY…AAVFIVEDGP (143 aa). Residues Asn-503, His-506, His-508, His-565, Cys-566, His-567, His-571, and Met-576 each contribute to the Cu cation site.

Belongs to the multicopper oxidase family. Requires Cu cation as cofactor.

It localises to the secreted. The protein resides in the extracellular space. The protein localises to the apoplast. It carries out the reaction 4 hydroquinone + O2 = 4 benzosemiquinone + 2 H2O. Lignin degradation and detoxification of lignin-derived products. This Oryza sativa subsp. japonica (Rice) protein is Laccase-15 (LAC15).